Consider the following 260-residue polypeptide: NAD-capped RNA hydrolase NudC (260 aa).

Arg-74 contributes to the substrate binding site. Positions 103, 106, 121, and 124 each coordinate Zn(2+). Residue Tyr-129 participates in substrate binding. A Nudix hydrolase domain is found at 130 to 253 (PRIFPCIIVA…TIARALIEQT (124 aa)). A divalent metal cation is bound by residues Ala-163, Glu-179, and Glu-183. The Nudix box motif lies at 164–185 (GFLEAGETLEDCVAREVHEETG). A substrate-binding site is contributed by 197–204 (QPWAFPSS). Glu-224 contacts a divalent metal cation. A substrate-binding site is contributed by Ala-246.

This sequence belongs to the Nudix hydrolase family. NudC subfamily. In terms of assembly, homodimer. Requires Mg(2+) as cofactor. The cofactor is Mn(2+). It depends on Zn(2+) as a cofactor.

It catalyses the reaction a 5'-end NAD(+)-phospho-ribonucleoside in mRNA + H2O = a 5'-end phospho-adenosine-phospho-ribonucleoside in mRNA + beta-nicotinamide D-ribonucleotide + 2 H(+). It carries out the reaction NAD(+) + H2O = beta-nicotinamide D-ribonucleotide + AMP + 2 H(+). The catalysed reaction is NADH + H2O = reduced beta-nicotinamide D-ribonucleotide + AMP + 2 H(+). Functionally, mRNA decapping enzyme that specifically removes the nicotinamide adenine dinucleotide (NAD) cap from a subset of mRNAs by hydrolyzing the diphosphate linkage to produce nicotinamide mononucleotide (NMN) and 5' monophosphate mRNA. The NAD-cap is present at the 5'-end of some mRNAs and stabilizes RNA against 5'-processing. Has preference for mRNAs with a 5'-end purine. Catalyzes the hydrolysis of a broad range of dinucleotide pyrophosphates. This is NAD-capped RNA hydrolase NudC from Vibrio parahaemolyticus serotype O3:K6 (strain RIMD 2210633).